Here is a 289-residue protein sequence, read N- to C-terminus: CRISPR-associated endoribonuclease Cas6 2 (289 aa).

It belongs to the CRISPR-associated endoribonuclease Cas6 family. In terms of assembly, possibly part of the aCascade ribonucleoprotein complex. The cofactor is Mg(2+).

Its function is as follows. CRISPR (clustered regularly interspaced short palindromic repeat) is an adaptive immune system that provides protection against mobile genetic elements (viruses, transposable elements and conjugative plasmids). CRISPR clusters contain sequences complementary to antecedent mobile elements and target invading nucleic acids. CRISPR clusters are transcribed and processed into CRISPR RNA (crRNA). Functions as a ssRNA-specific endoribonuclease, generating an 8 base-long tag known as the 5' handle. The polypeptide is CRISPR-associated endoribonuclease Cas6 2 (cas6b) (Saccharolobus solfataricus (strain ATCC 35092 / DSM 1617 / JCM 11322 / P2) (Sulfolobus solfataricus)).